We begin with the raw amino-acid sequence, 339 residues long: Ketol-acid reductoisomerase (NADP(+)) (339 aa).

Residues 1–182 (MRVYYDRDAD…GGGRAGIIET (182 aa)) enclose the KARI N-terminal Rossmann domain. NADP(+)-binding positions include 24-27 (YGSQ), R48, S51, and 83-86 (DEGQ). The active site involves H108. Residue G134 coordinates NADP(+). Positions 183–328 (SFKEEVETDL…EKLRGMMPWI (146 aa)) constitute a KARI C-terminal knotted domain. Residues D191, E195, E227, and E231 each coordinate Mg(2+). Substrate is bound at residue S252.

The protein belongs to the ketol-acid reductoisomerase family. Mg(2+) is required as a cofactor.

The catalysed reaction is (2R)-2,3-dihydroxy-3-methylbutanoate + NADP(+) = (2S)-2-acetolactate + NADPH + H(+). The enzyme catalyses (2R,3R)-2,3-dihydroxy-3-methylpentanoate + NADP(+) = (S)-2-ethyl-2-hydroxy-3-oxobutanoate + NADPH + H(+). It functions in the pathway amino-acid biosynthesis; L-isoleucine biosynthesis; L-isoleucine from 2-oxobutanoate: step 2/4. It participates in amino-acid biosynthesis; L-valine biosynthesis; L-valine from pyruvate: step 2/4. Involved in the biosynthesis of branched-chain amino acids (BCAA). Catalyzes an alkyl-migration followed by a ketol-acid reduction of (S)-2-acetolactate (S2AL) to yield (R)-2,3-dihydroxy-isovalerate. In the isomerase reaction, S2AL is rearranged via a Mg-dependent methyl migration to produce 3-hydroxy-3-methyl-2-ketobutyrate (HMKB). In the reductase reaction, this 2-ketoacid undergoes a metal-dependent reduction by NADPH to yield (R)-2,3-dihydroxy-isovalerate. The polypeptide is Ketol-acid reductoisomerase (NADP(+)) (Gluconacetobacter diazotrophicus (strain ATCC 49037 / DSM 5601 / CCUG 37298 / CIP 103539 / LMG 7603 / PAl5)).